The chain runs to 129 residues: Phosphoribosyl-AMP cyclohydrolase (129 aa).

Mg(2+) is bound at residue D77. C78 is a Zn(2+) binding site. D79 and D81 together coordinate Mg(2+). The Zn(2+) site is built by C94 and C101.

The protein belongs to the PRA-CH family. As to quaternary structure, homodimer. Mg(2+) serves as cofactor. Requires Zn(2+) as cofactor.

It is found in the cytoplasm. It carries out the reaction 1-(5-phospho-beta-D-ribosyl)-5'-AMP + H2O = 1-(5-phospho-beta-D-ribosyl)-5-[(5-phospho-beta-D-ribosylamino)methylideneamino]imidazole-4-carboxamide. The protein operates within amino-acid biosynthesis; L-histidine biosynthesis; L-histidine from 5-phospho-alpha-D-ribose 1-diphosphate: step 3/9. Catalyzes the hydrolysis of the adenine ring of phosphoribosyl-AMP. In Pelotomaculum thermopropionicum (strain DSM 13744 / JCM 10971 / SI), this protein is Phosphoribosyl-AMP cyclohydrolase.